A 2004-amino-acid polypeptide reads, in one-letter code: Alpha-2-macroglobulin homolog (2004 aa).

Positions 1–27 are cleaved as a signal peptide; it reads MLCCLVFKGLLSMDLLRFLLISPFALI.

It belongs to the protease inhibitor I39 (alpha-2-macroglobulin) family. Bacterial alpha-2-macroglobulin subfamily.

This is Alpha-2-macroglobulin homolog from Yersinia pestis.